The primary structure comprises 132 residues: Large ribosomal subunit protein uL14 (132 aa).

It belongs to the universal ribosomal protein uL14 family. Part of the 50S ribosomal subunit. Forms a cluster with proteins L3 and L24e, part of which may contact the 16S rRNA in 2 intersubunit bridges.

Its function is as follows. Binds to 23S rRNA. Forms part of two intersubunit bridges in the 70S ribosome. The polypeptide is Large ribosomal subunit protein uL14 (Methanococcus maripaludis (strain C7 / ATCC BAA-1331)).